We begin with the raw amino-acid sequence, 238 residues long: Protein Iojap, chloroplastic (238 aa).

The N-terminal 66 residues, 1-66, are a transit peptide targeting the chloroplast; the sequence is MASSTGLTVA…KILTSLSNSR (66 aa).

Belongs to the Iojap/RsfS family. Interacts with chloroplast ribosomal protein uL14c (rpl14).

Its subcellular location is the plastid. The protein localises to the chloroplast. Functionally, may be a ribosome silencing factor (Potential). Involved in plastid biogenesis. The sequence is that of Protein Iojap, chloroplastic (IJ) from Arabidopsis thaliana (Mouse-ear cress).